A 517-amino-acid polypeptide reads, in one-letter code: Ribose import ATP-binding protein RbsA 2 (517 aa).

ABC transporter domains are found at residues 11–251 (LEMR…VGRD) and 263–507 (YDPG…ALAT). Residue 43–50 (GENGAGKS) participates in ATP binding.

Belongs to the ABC transporter superfamily. Ribose importer (TC 3.A.1.2.1) family. The complex is composed of an ATP-binding protein (RbsA), two transmembrane proteins (RbsC) and a solute-binding protein (RbsB).

The protein localises to the cell inner membrane. It carries out the reaction D-ribose(out) + ATP + H2O = D-ribose(in) + ADP + phosphate + H(+). In terms of biological role, part of the ABC transporter complex RbsABC involved in ribose import. Responsible for energy coupling to the transport system. The chain is Ribose import ATP-binding protein RbsA 2 from Burkholderia pseudomallei (strain 1710b).